A 253-amino-acid polypeptide reads, in one-letter code: Chitooligosaccharide deacetylase (253 aa).

2 residues coordinate Mg(2+): His-61 and His-125.

This sequence belongs to the YdjC deacetylase family. ChbG subfamily. Homodimer. Mg(2+) serves as cofactor.

It is found in the cytoplasm. It catalyses the reaction N,N'-diacetylchitobiose + H2O = N-acetyl-beta-D-glucosaminyl-(1-&gt;4)-D-glucosamine + acetate. The catalysed reaction is diacetylchitobiose-6'-phosphate + H2O = N'-monoacetylchitobiose-6'-phosphate + acetate. The protein operates within glycan degradation; chitin degradation. Involved in the degradation of chitin. ChbG is essential for growth on the acetylated chitooligosaccharides chitobiose and chitotriose but is dispensable for growth on cellobiose and chitosan dimer, the deacetylated form of chitobiose. Deacetylation of chitobiose-6-P and chitotriose-6-P is necessary for both the activation of the chb promoter by the regulatory protein ChbR and the hydrolysis of phosphorylated beta-glucosides by the phospho-beta-glucosidase ChbF. Catalyzes the removal of only one acetyl group from chitobiose-6-P to yield monoacetylchitobiose-6-P, the inducer of ChbR and the substrate of ChbF. This chain is Chitooligosaccharide deacetylase, found in Proteus mirabilis (strain HI4320).